Consider the following 170-residue polypeptide: MAKHQINYAANGGLPVVLTTVDKLVQWGRSNSLWALSYGLACCAIEMMASGASRYDFDRFGTIFRASPRHSEVMIIAGTLTKKHAEFTRRLYDQMPEPKWVISMGSCANTGGMFNTYSTVQGVDRIIPVDIYIPGCAPRPETLQYALMMLQKKIRKQSAFRAQKPRKLEI.

Residues Cys-42, Cys-43, Cys-107, and Cys-136 each contribute to the [4Fe-4S] cluster site.

This sequence belongs to the complex I 20 kDa subunit family. NDH-1 is composed of 14 different subunits. Subunits NuoB, C, D, E, F, and G constitute the peripheral sector of the complex. [4Fe-4S] cluster serves as cofactor.

The protein localises to the cell inner membrane. It carries out the reaction a quinone + NADH + 5 H(+)(in) = a quinol + NAD(+) + 4 H(+)(out). NDH-1 shuttles electrons from NADH, via FMN and iron-sulfur (Fe-S) centers, to quinones in the respiratory chain. The immediate electron acceptor for the enzyme in this species is believed to be ubiquinone. Couples the redox reaction to proton translocation (for every two electrons transferred, four hydrogen ions are translocated across the cytoplasmic membrane), and thus conserves the redox energy in a proton gradient. This is NADH-quinone oxidoreductase subunit B from Campylobacter concisus (strain 13826).